The sequence spans 576 residues: D-lactate dehydrogenase [cytochrome], mitochondrial (576 aa).

The FAD-binding PCMH-type domain maps to 139 to 320; it reads EANQRPEIVL…TEATIKCHVR (182 aa).

This sequence belongs to the FAD-binding oxidoreductase/transferase type 4 family. FAD is required as a cofactor. Requires Zn(2+) as cofactor.

The protein resides in the mitochondrion matrix. It carries out the reaction (R)-lactate + 2 Fe(III)-[cytochrome c] = 2 Fe(II)-[cytochrome c] + pyruvate + 2 H(+). Catalyzes the stereospecific oxidation of D-lactate to pyruvate. The sequence is that of D-lactate dehydrogenase [cytochrome], mitochondrial (DLD1) from Kluyveromyces lactis (strain ATCC 8585 / CBS 2359 / DSM 70799 / NBRC 1267 / NRRL Y-1140 / WM37) (Yeast).